We begin with the raw amino-acid sequence, 429 residues long: 3-phosphoshikimate 1-carboxyvinyltransferase (429 aa).

The 3-phosphoshikimate site is built by Lys22, Ser23, and Arg27. Lys22 contributes to the phosphoenolpyruvate binding site. Phosphoenolpyruvate is bound by residues Gly93 and Arg122. 3-phosphoshikimate-binding residues include Ser168, Ser169, Gln170, Ser196, Asp311, and Lys338. Gln170 serves as a coordination point for phosphoenolpyruvate. Asp311 acts as the Proton acceptor in catalysis. 2 residues coordinate phosphoenolpyruvate: Arg342 and Arg384.

The protein belongs to the EPSP synthase family. In terms of assembly, monomer.

Its subcellular location is the cytoplasm. The catalysed reaction is 3-phosphoshikimate + phosphoenolpyruvate = 5-O-(1-carboxyvinyl)-3-phosphoshikimate + phosphate. It participates in metabolic intermediate biosynthesis; chorismate biosynthesis. Catalyzes the transfer of the enolpyruvyl moiety of phosphoenolpyruvate (PEP) to the 5-hydroxyl of shikimate-3-phosphate (S3P) to produce enolpyruvyl shikimate-3-phosphate and inorganic phosphate. The polypeptide is 3-phosphoshikimate 1-carboxyvinyltransferase (Methanocaldococcus jannaschii (strain ATCC 43067 / DSM 2661 / JAL-1 / JCM 10045 / NBRC 100440) (Methanococcus jannaschii)).